The chain runs to 109 residues: Cytochrome c6 (109 aa).

The signal sequence occupies residues 1 to 25; sequence MFKNIIIVVAVTLCALFTNEHVVYS. Heme c contacts are provided by Cys-39, Cys-42, His-43, and Met-83.

It belongs to the cytochrome c family. PetJ subfamily. As to quaternary structure, monomer. Binds 1 heme c group covalently per subunit.

The protein localises to the plastid. It localises to the chloroplast thylakoid lumen. In terms of biological role, functions as an electron carrier between membrane-bound cytochrome b6-f and photosystem I in oxygenic photosynthesis. The sequence is that of Cytochrome c6 (petJ) from Cyanidium caldarium (Red alga).